The primary structure comprises 214 residues: Cytochrome b (214 aa).

The next 4 membrane-spanning stretches (helical) occupy residues 31-51 (FGSM…FLAI), 75-96 (WIMQ…YIHI), 111-131 (WLSG…GYVL), and 176-196 (FFAL…IHIL). Heme b contacts are provided by H81 and H95. Heme b contacts are provided by H180 and H194. Residue H199 participates in a ubiquinone binding.

Belongs to the cytochrome b family. As to quaternary structure, the cytochrome bc1 complex contains 3 respiratory subunits (MT-CYB, CYC1 and UQCRFS1), 2 core proteins (UQCRC1 and UQCRC2) and probably 6 low-molecular weight proteins. Requires heme b as cofactor.

Its subcellular location is the mitochondrion inner membrane. Component of the ubiquinol-cytochrome c reductase complex (complex III or cytochrome b-c1 complex) that is part of the mitochondrial respiratory chain. The b-c1 complex mediates electron transfer from ubiquinol to cytochrome c. Contributes to the generation of a proton gradient across the mitochondrial membrane that is then used for ATP synthesis. This Trimeresurus stejnegeri (Chinese green tree viper) protein is Cytochrome b (MT-CYB).